Reading from the N-terminus, the 1863-residue chain is 5'-3' DNA helicase ZGRF1 (1863 aa).

Disordered stretches follow at residues 78 to 110 (SRAVEPDGSREALESGSRTLVSSSRSLGCQPSG), 132 to 196 (ENSE…PLSL), and 300 to 349 (TQSI…PEAQ). Residues 81-90 (VEPDGSREAL) show a composition bias toward basic and acidic residues. Residues 92-105 (SGSRTLVSSSRSLG) are compositionally biased toward low complexity. 2 stretches are compositionally biased toward polar residues: residues 173–185 (PVSTDNQSPITFS) and 300–321 (TQSIGNLRCEQQSENPTRTTSR). S331 and S445 each carry phosphoserine. 3 disordered regions span residues 460 to 496 (PVSPLPEIGHKQTEVEASLSTSSRISDDIADMGSKSN), 524 to 545 (TSDTDEASQEDSRLSQDSERWE), and 610 to 664 (GDVK…GVSP). The span at 533–545 (EDSRLSQDSERWE) shows a compositional bias: basic and acidic residues. C1111, H1113, C1136, and C1144 together coordinate Zn(2+). A GRF-type zinc finger spans residues 1111 to 1153 (CHHNQPAKLVMVKKEGPNKGRLFYTCDKSKDNQCKFFKWLEEV).

In terms of assembly, interacts with DNA repair protein RAD51; the interaction promotes RAD51 strand exchange activity. Also interacts with DNA repair proteins EXO1 and BRCA1; the interactions are increased following DNA damage induction.

The protein resides in the nucleus. The catalysed reaction is ATP + H2O = ADP + phosphate + H(+). The enzyme catalyses Couples ATP hydrolysis with the unwinding of duplex DNA at the replication fork by translocating in the 5'-3' direction. This creates two antiparallel DNA single strands (ssDNA). The leading ssDNA polymer is the template for DNA polymerase III holoenzyme which synthesizes a continuous strand.. Its function is as follows. 5'-3' DNA helicase which is recruited to sites of DNA damage and promotes repair of replication-blocking DNA lesions through stimulation of homologous recombination (HR). Promotes HR by directly stimulating RAD51-mediated strand exchange activity. Not required to load RAD51 at sites of DNA damage but promotes recombinational repair after RAD51 recruitment. Also promotes HR by positively regulating EXO1-mediated DNA end resection of DNA double-strand breaks. Required for recruitment of replication protein RPA2 to DNA damage sites. Promotes the initiation of the G2/M checkpoint but not its maintenance. Catalyzes Holliday junction branch migration and dissociation of D-loops and DNA flaps. The polypeptide is 5'-3' DNA helicase ZGRF1 (Zgrf1) (Mus musculus (Mouse)).